The following is a 373-amino-acid chain: METTKNRRVRFTGGLHEPAQDSTMCGNAELQSRERTKTRQRVYNESKRDLVDLLRVYTCLNSVRMFTFVNFGRRIPLAWPEGYQLVINNCRDENEYADEKLDELAGLVCCPERLVVLGYVKKRGGIGSEPCYWFSKGDIVVLLGGAGRVYAHTWLLPQQLCRVGDTIDDFLRKGLKRFYYAHQLVSSLQFVVEDPEVDGVRSCRDVLCFRDRHIGRSFALRWPKNETLLFHRRRDSFAFVMCDEARRRLAEMCFFGSFGYKYFGDEGRISLYVADDGQIFGFNDNDEDGRPRFVAEDFQQFRRIGVTQYYKSYVFRREQPEWALLPTCHLSRMFYQKTWRQADADVLFLIARNDERNKFPDAGTRSAVHDVVR.

Belongs to the herpesviridae US22 family.

In Human herpesvirus 6A (strain Uganda-1102) (HHV-6 variant A), this protein is Protein U3 (U3).